The sequence spans 829 residues: Spindle-defective protein 2 (829 aa).

Disordered regions lie at residues 1–29 (MNED…DGES), 41–104 (EDED…SNDI), 183–294 (KKDV…TTSD), and 326–471 (RKKR…NGHM). The span at 54–82 (FRLENRYKPSLHTPRELPTIREENREDVR) shows a compositional bias: basic and acidic residues. The segment covering 83–93 (SNTSSRVNTRP) has biased composition (polar residues). Residues 183–216 (KKDVTRKQENVRPGKMMPEKVNDENEPKSRRFSP) show a composition bias toward basic and acidic residues. Polar residues-rich tracts occupy residues 217-230 (ERNT…NSTK) and 266-294 (PQRT…TTSD). Residues 314 to 332 (VDINLLTALENARKKRDRP) are a coiled coil. Composition is skewed to low complexity over residues 361–370 (SMTSIVSSST) and 384–408 (NSAT…RVST). Polar residues-rich tracts occupy residues 409–439 (AKND…NSMT) and 448–463 (SVSS…STMT).

It localises to the cytoplasm. Its subcellular location is the cytoskeleton. It is found in the microtubule organizing center. The protein localises to the centrosome. The protein resides in the centriole. In terms of biological role, required both for centrosome duplication and maturation. Required for pericentriolar material (PCM) recruitment. This is Spindle-defective protein 2 from Caenorhabditis briggsae.